The following is a 651-amino-acid chain: MAAHVSTGNIHNFYLAGQVYRGQAFSWSSASTFMANPFKEPSWSSGVFKALKAERCGCYSRGISPISETSKPIRAVSVSSSTKYYDFTVIGSGVAGLRYALEVAKQGTVAVITKDEPHESNTNYAQGGVSAVLCPLDSVESHMRDTMVAGAHLCDEETVRVVCTEGPERIRELIAMGASFDHGEDGNLHLAREGGHSHCRIVHAADMTGREIERALLEAVLNDPNISVFKHHFAIDLLTSQDGLNTVCHGVDTLNIKTNEVVRFISKVTLLASGGAGHIYPSTTNPLVATGDGMAMAHRAQAVISNMEFVQFHPTALADEGLPIKLQTARENAFLITEAVRGDGGILYNLGMERFMPVYDERAELAPRDVVARSIDDQLKKRNEKYVLLDISHKPREKILAHFPNIASECLKHGLDITRQPIPVVPAAHYMCGGVRAGLQGETNVLGLFVAGEVACTGLHGANRLASNSLLEALVFARRAVQPSTELMKRTRLDVCASEKWTRPVVATARLLGDEVIAKIIALTKEVRRELQEVMWKYVGIVRSTIRLTTAERKIAELEAKWETFLFEHGWEQTVVALEACEMRNLFCCAKLVVSSALARHESRGLHYMTDFPFVEESKRIPTIILPSSPTTASWSSRRLQNISSSSLIDC.

The transit peptide at 1 to 74 directs the protein to the chloroplast; that stretch reads MAAHVSTGNI…PISETSKPIR (74 aa). Residues 92–95, Lys-114, 121–128, and Asp-292 contribute to the FAD site; these read SGVA and NTNYAQGG. The active-site Proton donor/acceptor is the Arg-368. Residues Glu-453 and 469 to 470 each bind FAD; that span reads SL.

This sequence belongs to the FAD-dependent oxidoreductase 2 family. NadB subfamily. As to quaternary structure, interacts in vitro with QS. It depends on FAD as a cofactor.

It is found in the plastid. It localises to the chloroplast. It carries out the reaction L-aspartate + O2 = iminosuccinate + H2O2. The protein operates within cofactor biosynthesis; NAD(+) biosynthesis; iminoaspartate from L-aspartate (oxidase route): step 1/1. Functionally, catalyzes the oxidation of L-aspartate to iminoaspartate. Can complement nadB-deficient E.coli mutant. Plays a role in stomatal immunity. This chain is L-aspartate oxidase, chloroplastic, found in Arabidopsis thaliana (Mouse-ear cress).